The sequence spans 647 residues: Threonine--tRNA ligase (647 aa).

In terms of domain architecture, TGS spans 1 to 61 (MIKITFPDGA…EEDGSIEIVT (61 aa)). The interval 240 to 538 (DHRKLGKELD…LIETYKGAFP (299 aa)) is catalytic. Zn(2+) contacts are provided by C334, H385, and H515.

This sequence belongs to the class-II aminoacyl-tRNA synthetase family. As to quaternary structure, homodimer. Zn(2+) serves as cofactor.

It localises to the cytoplasm. It catalyses the reaction tRNA(Thr) + L-threonine + ATP = L-threonyl-tRNA(Thr) + AMP + diphosphate + H(+). In terms of biological role, catalyzes the attachment of threonine to tRNA(Thr) in a two-step reaction: L-threonine is first activated by ATP to form Thr-AMP and then transferred to the acceptor end of tRNA(Thr). Also edits incorrectly charged L-seryl-tRNA(Thr). The polypeptide is Threonine--tRNA ligase (Streptococcus pyogenes serotype M28 (strain MGAS6180)).